We begin with the raw amino-acid sequence, 399 residues long: Enoyl-[acyl-carrier-protein] reductase [NADH] 2 (399 aa).

NAD(+)-binding positions include 48–53 (GASSGF), 75–76 (FE), 112–113 (DA), and 141–142 (LA). A substrate-binding site is contributed by Tyr227. Tyr237 (proton donor) is an active-site residue. Residues Lys246 and 275–277 (LVT) each bind NAD(+).

This sequence belongs to the TER reductase family. As to quaternary structure, monomer.

It carries out the reaction a 2,3-saturated acyl-[ACP] + NAD(+) = a (2E)-enoyl-[ACP] + NADH + H(+). It participates in lipid metabolism; fatty acid biosynthesis. Its function is as follows. Involved in the final reduction of the elongation cycle of fatty acid synthesis (FAS II). Catalyzes the reduction of a carbon-carbon double bond in an enoyl moiety that is covalently linked to an acyl carrier protein (ACP). The polypeptide is Enoyl-[acyl-carrier-protein] reductase [NADH] 2 (Vibrio parahaemolyticus serotype O3:K6 (strain RIMD 2210633)).